A 341-amino-acid chain; its full sequence is Glucokinase (341 aa).

18–23 (GDIGGT) contacts ATP.

It belongs to the bacterial glucokinase family.

The protein localises to the cytoplasm. It carries out the reaction D-glucose + ATP = D-glucose 6-phosphate + ADP + H(+). This Mesorhizobium japonicum (strain LMG 29417 / CECT 9101 / MAFF 303099) (Mesorhizobium loti (strain MAFF 303099)) protein is Glucokinase.